The following is a 426-amino-acid chain: Colanic acid biosynthesis protein WcaK (426 aa).

The protein belongs to the polysaccharide pyruvyl transferase family.

Its pathway is slime biogenesis; slime polysaccharide biosynthesis. This Escherichia coli (strain K12) protein is Colanic acid biosynthesis protein WcaK (wcaK).